The following is a 263-amino-acid chain: UPF0758 protein NGR_c13970 (263 aa).

An MPN domain is found at 141–263 (VLSSWSAVID…HVSMKGLRLF (123 aa)). Zn(2+) contacts are provided by H212, H214, and D225. A JAMM motif motif is present at residues 212–225 (HNHPSGDPTPSRAD).

Belongs to the UPF0758 family.

The protein is UPF0758 protein NGR_c13970 of Sinorhizobium fredii (strain NBRC 101917 / NGR234).